The sequence spans 294 residues: Protein ATC1/LIC4 (294 aa).

The segment at Tyr-114 to Asn-178 is disordered. The segment covering His-130–Thr-145 has biased composition (basic and acidic residues). Positions Leu-153–Ser-175 are enriched in low complexity.

Its subcellular location is the cytoplasm. It localises to the nucleus. In terms of biological role, involved in cation homeostasis and in the regulation of the cation stress signaling cascades. Also involved in bipolar budding. The protein is Protein ATC1/LIC4 (ATC1) of Saccharomyces cerevisiae (strain ATCC 204508 / S288c) (Baker's yeast).